Here is a 272-residue protein sequence, read N- to C-terminus: MYTLKRFGQHWLNDGAVLDRIVAAAGLACGDRVLEIGPGLGSLTARLLRQVPVVAVEIDRRAVAQLQRQFGGDKRFVLVEGDILREALPEPANVVVANIPYNISGPILAKLTGSLAQPIRRFRTIVLLVQKELGQRIAAPPGSRTYGALSVRLQYLAECELLFEVPSHCFTPPPKVDSAVIRLTPRPFALQADDPAHLDALVTRAFATRRKMLKNCLKGWVETEKLLAAFASLDISPDARAEDLSVERFVQLSNRLAESDYPSGAARGDRRA.

Residues H10, L12, G37, E57, D82, and N98 each coordinate S-adenosyl-L-methionine.

Belongs to the class I-like SAM-binding methyltransferase superfamily. rRNA adenine N(6)-methyltransferase family. RsmA subfamily.

The protein resides in the cytoplasm. The catalysed reaction is adenosine(1518)/adenosine(1519) in 16S rRNA + 4 S-adenosyl-L-methionine = N(6)-dimethyladenosine(1518)/N(6)-dimethyladenosine(1519) in 16S rRNA + 4 S-adenosyl-L-homocysteine + 4 H(+). Specifically dimethylates two adjacent adenosines (A1518 and A1519) in the loop of a conserved hairpin near the 3'-end of 16S rRNA in the 30S particle. May play a critical role in biogenesis of 30S subunits. The polypeptide is Ribosomal RNA small subunit methyltransferase A (Gloeobacter violaceus (strain ATCC 29082 / PCC 7421)).